The following is a 939-amino-acid chain: UvrABC system protein A (939 aa).

32 to 39 (GLSGSGKS) provides a ligand contact to ATP. The C4-type zinc finger occupies 252 to 279 (CADCGISIDELAPRMFSFNSPFGKCERC). ABC transporter domains lie at 309–588 (WGDS…ENSL) and 608–936 (GNGN…KYLK). 640–647 (GVSGSGKS) contributes to the ATP binding site. Residues 739–765 (CEACSGDGIIKIEMQFLSDVYVPCEVC) form a C4-type zinc finger.

This sequence belongs to the ABC transporter superfamily. UvrA family. In terms of assembly, forms a heterotetramer with UvrB during the search for lesions.

It is found in the cytoplasm. The UvrABC repair system catalyzes the recognition and processing of DNA lesions. UvrA is an ATPase and a DNA-binding protein. A damage recognition complex composed of 2 UvrA and 2 UvrB subunits scans DNA for abnormalities. When the presence of a lesion has been verified by UvrB, the UvrA molecules dissociate. The chain is UvrABC system protein A from Clostridium perfringens (strain 13 / Type A).